The following is a 108-amino-acid chain: Con-Ins K1 (108 aa).

Positions 1-24 are cleaved as a signal peptide; sequence MTTSSYFLLVALGLLLYVCQSSFG. The propeptide occupies 25–28; sequence SPHT. Intrachain disulfides connect C41/C90, C53/C103, and C89/C94. At E44 the chain carries 4-carboxyglutamate. A propeptide spans 57-83 (c peptide); sequence RKRRGFPSMLKARAKRNEAFLLQRDGR. E87 is modified (4-carboxyglutamate). At Q107 the chain carries Glutamine amide.

It belongs to the insulin family. As to quaternary structure, heterodimer of A and B chains; disulfide-linked. Expressed by the venom gland.

The protein resides in the secreted. In terms of biological role, this venom insulin, from a fish-hunting cone snail, facilitates prey capture by rapidly inducing hypoglycemic shock. It is one of the smallest known insulin found in nature and lacks the C-terminal segment of the B chain that, in human insulin, mediates engagement of the insulin receptor (INSR) and assembly of the hormone's hexameric storage form. Despite lacking this segment, it both binds and activates human insulin receptor (long isoform (HIR-B)) with a moderate potency (EC(50)=30.45 nM). In vivo, intraperitoneal injection of this peptide into zebrafish lowers blood glucose with a lower potency than human insulin. In addition, when applied to water, this peptide reduces overall locomotor activity of zebrafish larvae, observed as a significant decrease in the percentage of time spent swimming and movement frequency. When tested on a mouse model of diabetes, this insulin also lowers blood glucose with a 20-fold lower potency than human insulin. The polypeptide is Con-Ins K1 (Conus kinoshitai (Kinoshita's cone)).